The following is a 1033-amino-acid chain: Phospholipid-transporting ATPase neo1 (1033 aa).

Transmembrane regions (helical) follow at residues 133-153 (LKIGYLSTYIAPLIFVLLITL), 274-294 (TLWANTVLASDGVYGVVVYTG), 317-337 (INFYSKILCTFVLVLSIGLTF), and 344-364 (DWYISVFRYLILFSSIIPINL). The active-site 4-aspartylphosphate intermediate is Asp-408. 15 residues coordinate ATP: Asp-408, Lys-409, Thr-410, Glu-491, Phe-528, Ser-530, Lys-533, Lys-551, Arg-580, Thr-581, Thr-662, Gly-663, Asp-664, Arg-744, and Lys-750. Position 408 (Asp-408) interacts with Mg(2+). Residue Thr-410 participates in Mg(2+) binding. Helical transmembrane passes span 768 to 788 (IGDGGNDVGMIQVANVGIGIV), 843 to 863 (VVYSVISAFEPIALFQGLLLV), 913 to 933 (VLISVYQGLIIQLFTFYLIGF), 939 to 959 (MLAVCFSCLIFNELIMVALQI), 965 to 985 (TIVMSELLTLMMYILSVPFLT), and 992 to 1012 (FLLGLKFYWVSALILFISLLP). Asp-770 lines the Mg(2+) pocket. Positions 773 and 774 each coordinate ATP. Position 774 (Asp-774) interacts with Mg(2+).

The protein belongs to the cation transport ATPase (P-type) (TC 3.A.3) family. Type IV subfamily. As to quaternary structure, functions without a CDC50/LEM3 family accessory subunit. The cofactor is Mg(2+).

The protein resides in the endosome membrane. It is found in the golgi apparatus membrane. It catalyses the reaction ATP + H2O + phospholipidSide 1 = ADP + phosphate + phospholipidSide 2.. The enzyme catalyses a 1,2-diacyl-sn-glycero-3-phospho-L-serine(out) + ATP + H2O = a 1,2-diacyl-sn-glycero-3-phospho-L-serine(in) + ADP + phosphate + H(+). The catalysed reaction is a 1,2-diacyl-sn-glycero-3-phosphoethanolamine(out) + ATP + H2O = a 1,2-diacyl-sn-glycero-3-phosphoethanolamine(in) + ADP + phosphate + H(+). Functionally, flippase that catalyzes the hydrolysis of ATP coupled to the transport of lysophosphatidylserine, phosphatidylethanolamine, and phosphatidylserine from the lumenal to the cytosolic leaflet of the Golgi apparatus membrane and ensures the maintenance of asymmetric distribution of phospholipids. The polypeptide is Phospholipid-transporting ATPase neo1 (Schizosaccharomyces pombe (strain 972 / ATCC 24843) (Fission yeast)).